The sequence spans 143 residues: Hemoglobin-1 (143 aa).

Position 2 is an N-acetylserine (S2). The region spanning 2–143 (SLSAAQKDNV…ALMGMIRPNM (142 aa)) is the Globin domain. H97 contacts heme b.

It belongs to the globin family. In terms of assembly, monomer.

It is found in the cytoplasm. Its function is as follows. Serves to transport hydrogen sulfide to autotrophic bacteria. The chain is Hemoglobin-1 from Phacoides pectinatus (Thick lucine).